The primary structure comprises 303 residues: Polyisoprenyl-teichoic acid--peptidoglycan teichoic acid transferase TagU (303 aa).

At 1 to 4 the chain is on the cytoplasmic side; the sequence is MKKK. A helical; Signal-anchor for type II membrane protein membrane pass occupies residues 5-25; the sequence is ILFWVLGILGVLIIGGGIYAY. Topologically, residues 26-303 are extracellular; sequence NVYSSVSNTL…KLRSHLEVTK (278 aa).

This sequence belongs to the LytR/CpsA/Psr (LCP) family.

Its subcellular location is the cell membrane. The protein operates within cell wall biogenesis. Its function is as follows. May catalyze the final step in cell wall teichoic acid biosynthesis, the transfer of the anionic cell wall polymers (APs) from their lipid-linked precursor to the cell wall peptidoglycan (PG). The protein is Polyisoprenyl-teichoic acid--peptidoglycan teichoic acid transferase TagU of Bacillus cereus (strain AH820).